The sequence spans 305 residues: Mitochondrial uncoupling protein 3 (305 aa).

Solcar repeat units follow at residues T14–L100, L112–F204, and D213–L299. Transmembrane regions (helical) follow at residues I16 to T36, V69 to I89, A118 to V138, K178 to Y198, T219 to V239, and W272 to S292.

It belongs to the mitochondrial carrier (TC 2.A.29) family.

It is found in the mitochondrion inner membrane. PUMPS are mitochondrial transporter proteins that create proton leaks across the inner mitochondrial membrane, thus uncoupling oxidative phosphorylation. This leads to a decrease in the efficiency of oxidative phosphorylation and an increase in heat production. May be involved in protecting plant cells against oxidative stress damage. The chain is Mitochondrial uncoupling protein 3 (PUMP3) from Arabidopsis thaliana (Mouse-ear cress).